The following is a 381-amino-acid chain: NF-kappa-B inhibitor-like protein 1 (381 aa).

Positions 1 to 34 (MSNPSPQVPEEEASTSVCRPKSSMASTSRRQRRE) are disordered. 2 ANK repeats span residues 64 to 93 (GQPP…DPAH) and 97 to 133 (HGDT…IKNK). Disordered regions lie at residues 131 to 167 (KNKD…EWRQ), 186 to 242 (GDAS…QEEE), and 256 to 294 (ELRE…RGSL). Phosphoserine is present on S150. A compositionally biased stretch (acidic residues) spans 150-159 (SAEEEEEDDA). Over residues 256 to 287 (ELRESRARRAQEALGDREPKPARAGPRAEHPR) the composition is skewed to basic and acidic residues.

As to quaternary structure, interacts with CACTIN (via N-terminal domain); the interaction occurs in a pro-inflammatory-independent manner.

It is found in the nucleus. Functionally, involved in the regulation of innate immune response. Acts as negative regulator of Toll-like receptor and interferon-regulatory factor (IRF) signaling pathways. Contributes to the negative regulation of transcriptional activation of NF-kappa-B target genes in response to endogenous pro-inflammatory stimuli. The protein is NF-kappa-B inhibitor-like protein 1 (NFKBIL1) of Macaca mulatta (Rhesus macaque).